The following is a 512-amino-acid chain: uncharacterized protein (512 aa).

Positions Met1–Gly22 are cleaved as a signal peptide. Asn167 carries an N-linked (GlcNAc...) asparagine glycan. Positions Ser251–Leu282 are disordered.

The protein localises to the secreted. This is an uncharacterized protein from Arthroderma benhamiae (strain ATCC MYA-4681 / CBS 112371) (Trichophyton mentagrophytes).